We begin with the raw amino-acid sequence, 214 residues long: Ribosomal RNA small subunit methyltransferase G (214 aa).

S-adenosyl-L-methionine contacts are provided by residues Gly73, Leu78, 124 to 125 (VE), and Arg139.

The protein belongs to the methyltransferase superfamily. RNA methyltransferase RsmG family.

Its subcellular location is the cytoplasm. The enzyme catalyses guanosine(527) in 16S rRNA + S-adenosyl-L-methionine = N(7)-methylguanosine(527) in 16S rRNA + S-adenosyl-L-homocysteine. Specifically methylates the N7 position of guanine in position 527 of 16S rRNA. The protein is Ribosomal RNA small subunit methyltransferase G of Aeromonas hydrophila subsp. hydrophila (strain ATCC 7966 / DSM 30187 / BCRC 13018 / CCUG 14551 / JCM 1027 / KCTC 2358 / NCIMB 9240 / NCTC 8049).